Consider the following 689-residue polypeptide: Potassium-transporting ATPase ATP-binding subunit (689 aa).

A run of 4 helical transmembrane segments spans residues 35 to 55 (VMFVVYIGSILTTAIWLAILA), 62 to 82 (AAFTGSIAMWLWFTVLFANFA), 220 to 240 (ALTILLVALTLVFVLATATLF), and 260 to 280 (VLVALLVCLIPTTIGGLLSAI). Asp-313 acts as the 4-aspartylphosphate intermediate in catalysis. ATP is bound by residues Asp-350, Glu-354, 383-390 (FSAQTRMS), and Lys-401. Positions 524 and 528 each coordinate Mg(2+). 3 helical membrane passes run 594 to 614 (FAIIPAAFAATYPQLNALNVM), 622 to 642 (AIMSAVIFNALVIVFLIPLAL), and 665 to 685 (VGGLLVPFVGIKLIDLLLVAL).

It belongs to the cation transport ATPase (P-type) (TC 3.A.3) family. Type IA subfamily. In terms of assembly, the system is composed of three essential subunits: KdpA, KdpB and KdpC.

It is found in the cell inner membrane. It carries out the reaction K(+)(out) + ATP + H2O = K(+)(in) + ADP + phosphate + H(+). Its function is as follows. Part of the high-affinity ATP-driven potassium transport (or Kdp) system, which catalyzes the hydrolysis of ATP coupled with the electrogenic transport of potassium into the cytoplasm. This subunit is responsible for energy coupling to the transport system and for the release of the potassium ions to the cytoplasm. In Serratia proteamaculans (strain 568), this protein is Potassium-transporting ATPase ATP-binding subunit.